Reading from the N-terminus, the 84-residue chain is Large ribosomal subunit protein bL27 (84 aa).

The segment at 1-21 (MATKKAGGSSRNGRDSAGRRL) is disordered.

The protein belongs to the bacterial ribosomal protein bL27 family.

The chain is Large ribosomal subunit protein bL27 from Pelagibacter ubique (strain HTCC1062).